Here is a 400-residue protein sequence, read N- to C-terminus: D(3) dopamine receptor (400 aa).

The Extracellular segment spans residues Met-1 to Tyr-32. N-linked (GlcNAc...) asparagine glycosylation is found at Asn-12 and Asn-19. Residues Ala-33–Leu-55 traverse the membrane as a helical segment. At Lys-56–Asn-65 the chain is on the cytoplasmic side. A helical transmembrane segment spans residues Tyr-66–Tyr-88. Residues Leu-89–Asp-104 are Extracellular-facing. N-linked (GlcNAc...) asparagine glycosylation occurs at Asn-97. A disulfide bond links Cys-103 and Cys-181. Residues Val-105–Ile-126 form a helical membrane-spanning segment. Residues Asp-127–Arg-149 are Cytoplasmic-facing. A helical transmembrane segment spans residues Val-150–Phe-170. The Extracellular segment spans residues Gly-171–Asp-187. Asn-173 carries an N-linked (GlcNAc...) asparagine glycan. A helical transmembrane segment spans residues Phe-188–Ala-209. At Arg-210–Gln-329 the chain is on the cytoplasmic side. The chain crosses the membrane as a helical span at residues Met-330–Leu-351. Topologically, residues Asn-352–Ser-366 are extracellular. Cys-355 and Cys-358 are oxidised to a cystine. The chain crosses the membrane as a helical span at residues Ala-367–Phe-386. Residues Asn-387 to Cys-400 are Cytoplasmic-facing.

It belongs to the G-protein coupled receptor 1 family. Interacts with CLIC6. Interacts with GRK4. Interacts with PALM. Interacts with FLNA (via filamin repeat 21); increases PKA-mediated phosphorylation of FLNA. Phosphorylated by GRK4. Post-translationally, palmitoylated.

It localises to the cell membrane. Dopamine receptor whose activity is mediated by G proteins which inhibit adenylyl cyclase. Promotes cell proliferation. The protein is D(3) dopamine receptor (DRD3) of Chlorocebus aethiops (Green monkey).